We begin with the raw amino-acid sequence, 236 residues long: Chloride intracellular channel protein 3 (236 aa).

Residues 1-88 (MAETKLQLFV…EDFLEETLGP (88 aa)) are required for insertion into the membrane. Residues 12–90 (ASEDGESVGH…FLEETLGPPD (79 aa)) enclose the GST N-terminal domain. Residues 22–25 (CPSC) carry the G-site motif. Cysteines 22 and 25 form a disulfide. Residues 24-44 (SCQRLFMVLLLKGVPFTLTTV) traverse the membrane as a helical segment. S49 and S159 each carry phosphoserine. A GST C-terminal domain is found at 68 to 235 (DSDAKTDTLQ…LAAYRPAVHP (168 aa)).

This sequence belongs to the chloride channel CLIC family. Associated with the C-terminal of MAPK15. In terms of tissue distribution, detected in placenta (at protein level). Widely expressed. High expression is found in placenta followed by lung and heart. Low expression in skeletal muscle, kidney and pancreas.

It is found in the nucleus. Its subcellular location is the membrane. It localises to the cell membrane. The protein localises to the cytoplasm. The protein resides in the secreted. It is found in the extracellular space. Its subcellular location is the extracellular matrix. It carries out the reaction chloride(in) = chloride(out). Inhibited by rapamycin, amphotericin B and IAA-94. In terms of biological role, in the soluble state, catalyzes glutaredoxin-like thiol disulfide exchange reactions with reduced glutathione as electron donor. Reduced in a glutathione-dependent way and secreted into the extracellular matrix where it activates TGM2 and promotes blood vessel growth during tissue remodeling as occurs in tumorigenesis. Can reduce specific cysteines in TGM2 and regulate cofactor binding. Can insert into membranes and form outwardly rectifying chloride ion channels. May participate in cellular growth control. The chain is Chloride intracellular channel protein 3 from Homo sapiens (Human).